The following is a 278-amino-acid chain: MQYEIVSAGEDVDDERARGRRAAAPAAPSSAVPSSAALSSAALSSAAQPTGAPPATAAARRGRDLPRERLLARGPAALSDAELVALLLGSGLPGHDVFALAHTLLARFGSLRALLDAAPDDFKGLRGIGPARTAILVAVVELARRALAEKARERPLVDSPGAVDDYLRLLIGTRPREVFVCLFLDARHRLVQTEETAHGSLTRMAVYPREIVRRALALNAAALIVAHNHPSGAVRPSAADRRLTRVLRDALALVDIKLIDHFVVGASDTFSFAQAGWI.

The segment at 1–64 is disordered; sequence MQYEIVSAGE…ATAAARRGRD (64 aa). Over residues 22–59 the composition is skewed to low complexity; it reads AAAPAAPSSAVPSSAALSSAALSSAAQPTGAPPATAAA. In terms of domain architecture, MPN spans 156-278; sequence LVDSPGAVDD…TFSFAQAGWI (123 aa). Positions 227, 229, and 240 each coordinate Zn(2+). The JAMM motif motif lies at 227 to 240; that stretch reads HNHPSGAVRPSAAD.

The protein belongs to the UPF0758 family.

In Burkholderia pseudomallei (strain 1106a), this protein is UPF0758 protein BURPS1106A_0984.